The primary structure comprises 460 residues: Bifunctional protein GlmU (460 aa).

Residues 1-229 (MSHYAIILAA…FEESLGVNDR (229 aa)) are pyrophosphorylase. Residues 8–11 (LAAG), lysine 22, glutamine 72, and 77–78 (GT) contribute to the UDP-N-acetyl-alpha-D-glucosamine site. Aspartate 102 is a binding site for Mg(2+). Positions 139, 154, 169, and 227 each coordinate UDP-N-acetyl-alpha-D-glucosamine. Position 227 (asparagine 227) interacts with Mg(2+). The tract at residues 230–250 (VALATAEDVMRRRINKAHMIN) is linker. The tract at residues 251–460 (GVTFQNPNAT…KKPHHPSQQK (210 aa)) is N-acetyltransferase. UDP-N-acetyl-alpha-D-glucosamine is bound by residues arginine 332 and lysine 350. Catalysis depends on histidine 362, which acts as the Proton acceptor. UDP-N-acetyl-alpha-D-glucosamine is bound by residues tyrosine 365 and asparagine 376. Acetyl-CoA is bound by residues alanine 379, 385–386 (NY), serine 404, alanine 422, and arginine 439.

The protein in the N-terminal section; belongs to the N-acetylglucosamine-1-phosphate uridyltransferase family. This sequence in the C-terminal section; belongs to the transferase hexapeptide repeat family. As to quaternary structure, homotrimer. It depends on Mg(2+) as a cofactor.

The protein resides in the cytoplasm. It carries out the reaction alpha-D-glucosamine 1-phosphate + acetyl-CoA = N-acetyl-alpha-D-glucosamine 1-phosphate + CoA + H(+). The catalysed reaction is N-acetyl-alpha-D-glucosamine 1-phosphate + UTP + H(+) = UDP-N-acetyl-alpha-D-glucosamine + diphosphate. It functions in the pathway nucleotide-sugar biosynthesis; UDP-N-acetyl-alpha-D-glucosamine biosynthesis; N-acetyl-alpha-D-glucosamine 1-phosphate from alpha-D-glucosamine 6-phosphate (route II): step 2/2. Its pathway is nucleotide-sugar biosynthesis; UDP-N-acetyl-alpha-D-glucosamine biosynthesis; UDP-N-acetyl-alpha-D-glucosamine from N-acetyl-alpha-D-glucosamine 1-phosphate: step 1/1. It participates in bacterial outer membrane biogenesis; LPS lipid A biosynthesis. Its function is as follows. Catalyzes the last two sequential reactions in the de novo biosynthetic pathway for UDP-N-acetylglucosamine (UDP-GlcNAc). The C-terminal domain catalyzes the transfer of acetyl group from acetyl coenzyme A to glucosamine-1-phosphate (GlcN-1-P) to produce N-acetylglucosamine-1-phosphate (GlcNAc-1-P), which is converted into UDP-GlcNAc by the transfer of uridine 5-monophosphate (from uridine 5-triphosphate), a reaction catalyzed by the N-terminal domain. In Streptococcus thermophilus (strain CNRZ 1066), this protein is Bifunctional protein GlmU.